Here is a 514-residue protein sequence, read N- to C-terminus: Membrane-bound lytic murein transglycosylase F (514 aa).

The signal sequence occupies residues 1-30 (MLSNNPLITKFRELFTVALVLALLSGCQWQ). A non-LT domain region spans residues 31-271 (DDNLTDLEKI…QLEEKYFGHV (241 aa)). The segment at 272-514 (GSFDYVDTRA…KTIEDPGPSQ (243 aa)) is LT domain. Glu316 is a catalytic residue. Positions 482–514 (PVPPRQANVDGSLNNEAAISSAEKTIEDPGPSQ) are disordered. Residues 490–499 (VDGSLNNEAA) are compositionally biased toward polar residues.

In the N-terminal section; belongs to the bacterial solute-binding protein 3 family. It in the C-terminal section; belongs to the transglycosylase Slt family.

It is found in the cell outer membrane. It carries out the reaction Exolytic cleavage of the (1-&gt;4)-beta-glycosidic linkage between N-acetylmuramic acid (MurNAc) and N-acetylglucosamine (GlcNAc) residues in peptidoglycan, from either the reducing or the non-reducing ends of the peptidoglycan chains, with concomitant formation of a 1,6-anhydrobond in the MurNAc residue.. Functionally, murein-degrading enzyme that degrades murein glycan strands and insoluble, high-molecular weight murein sacculi, with the concomitant formation of a 1,6-anhydromuramoyl product. Lytic transglycosylases (LTs) play an integral role in the metabolism of the peptidoglycan (PG) sacculus. Their lytic action creates space within the PG sacculus to allow for its expansion as well as for the insertion of various structures such as secretion systems and flagella. The chain is Membrane-bound lytic murein transglycosylase F from Photobacterium profundum (strain SS9).